The chain runs to 217 residues: Large ribosomal subunit protein uL1 (217 aa).

It belongs to the universal ribosomal protein uL1 family. Part of the 50S ribosomal subunit.

Its function is as follows. Binds directly to 23S rRNA. The L1 stalk is quite mobile in the ribosome, and is involved in E site tRNA release. Functionally, protein L1 is also a translational repressor protein, it controls the translation of the L11 operon by binding to its mRNA. The sequence is that of Large ribosomal subunit protein uL1 from Anaplasma marginale (strain St. Maries).